The primary structure comprises 275 residues: Dihydropteroate synthase (275 aa).

The Pterin-binding domain maps to 15–267 (PQIMGILNFT…DVAATSDMLK (253 aa)). Residue asparagine 22 participates in Mg(2+) binding. Residues threonine 62, aspartate 96, asparagine 115, aspartate 185, lysine 221, and 255–257 (RVH) contribute to the (7,8-dihydropterin-6-yl)methyl diphosphate site.

The protein belongs to the DHPS family. As to quaternary structure, homodimer. The cofactor is Mg(2+).

The enzyme catalyses (7,8-dihydropterin-6-yl)methyl diphosphate + 4-aminobenzoate = 7,8-dihydropteroate + diphosphate. Its pathway is cofactor biosynthesis; tetrahydrofolate biosynthesis; 7,8-dihydrofolate from 2-amino-4-hydroxy-6-hydroxymethyl-7,8-dihydropteridine diphosphate and 4-aminobenzoate: step 1/2. Catalyzes the condensation of para-aminobenzoate (pABA) with 6-hydroxymethyl-7,8-dihydropterin diphosphate (DHPt-PP) to form 7,8-dihydropteroate (H2Pte), the immediate precursor of folate derivatives. This is Dihydropteroate synthase (folP-A) from Haemophilus influenzae (strain ATCC 51907 / DSM 11121 / KW20 / Rd).